A 649-amino-acid polypeptide reads, in one-letter code: Stress-70 protein, mitochondrial (649 aa).

Residues 1 to 46 (MISASRAAAARLVGAAASRGPTAARHKDGWNGLSHEAFRIVSRRDY) constitute a mitochondrion transit peptide. Positions 1 to 432 (MISASRAAAA…IQGGVLAGDV (432 aa)) are interaction with NFS1. ADP is bound by residues Thr-63 and Asn-64. Positions 63 to 431 (TNSCVAVMEG…AIQGGVLAGD (369 aa)) are nucleotide-binding domain (NBD). Lys-76 carries the N6-acetyllysine modification. Thr-87 carries the phosphothreonine modification. N6-acetyllysine; alternate occurs at positions 135 and 138. An N6-succinyllysine; alternate mark is found at Lys-135 and Lys-138. Lys-143 carries the post-translational modification N6-acetyllysine. N6-acetyllysine; alternate is present on Lys-206. Lys-206 bears the N6-succinyllysine; alternate mark. Lys-206 is subject to N6-malonyllysine; alternate. An N6-acetyllysine mark is found at Lys-234 and Lys-288. An N6-acetyllysine; alternate modification is found at Lys-300. Residue Lys-300 is modified to N6-succinyllysine; alternate. ADP is bound by residues Glu-313, Lys-316, and Ser-320. Residue Lys-368 is modified to N6-succinyllysine. The ADP site is built by Gly-388 and Arg-391. Residue Lys-394 is modified to N6-succinyllysine. Ser-408 is subject to Phosphoserine. The interval 432–441 (VTDVLLLDVT) is interdomain linker. An N6-acetyllysine; alternate mark is found at Lys-565, Lys-598, and Lys-638. N6-succinyllysine; alternate is present on residues Lys-565, Lys-598, and Lys-638.

It belongs to the heat shock protein 70 family. As to quaternary structure, interacts strongly with the intermediate form of FXN and weakly with its mature form. Interacts with HSCB. Associates with the mitochondrial contact site and cristae organizing system (MICOS) complex, composed of at least MICOS10/MIC10, CHCHD3/MIC19, CHCHD6/MIC25, APOOL/MIC27, IMMT/MIC60, APOO/MIC23/MIC26 and QIL1/MIC13. This complex was also known under the names MINOS or MitOS complex. The MICOS complex associates with mitochondrial outer membrane proteins SAMM50, MTX1, MTX2 and DNAJC11, mitochondrial inner membrane protein TMEM11 and with HSPA9. Interacts with DNLZ, the interaction is required to prevent self-aggregation. Interacts with TESPA1. Interacts with PDPN. Interacts with NFU1, NFS1 and ISCU. Interacts with TP53; the interaction promotes TP53 degradation. Interacts (via SBD domain) with UBXN2A; the interaction with UBXN2A inhibits HSPA9/MOT-2 interaction with and degradation of TP53, thereby promotes TP53 translocation to the nucleus. Interacts with ITPR1 AND VDAC1; this interaction couples ITPR1 to VDAC1. Component of the TIM23 mitochondrial inner membrane pre-sequence translocase complex.

It localises to the mitochondrion. The protein localises to the nucleus. It is found in the nucleolus. Its subcellular location is the cytoplasm. The protein resides in the mitochondrion matrix. The enzyme catalyses ATP + H2O = ADP + phosphate + H(+). With respect to regulation, the chaperone activity is regulated by ATP-induced allosteric coupling of the nucleotide-binding (NBD) and substrate-binding (SBD) domains. ATP binding in the NBD leads to a conformational change in the NBD, which is transferred through the interdomain linker (IDL) to the substrate-binding domain (SBD). This elicits a reduced substrate affinity and a faster substrate exchange rate. Upon hydrolysis of ATP to ADP, the protein undergoes a conformational change that increases its affinity for substrate proteins. It cycles through repeated phases of ATP hydrolysis and nucleotide exchange, facilitating repeated cycles of substrate binding and release. Functions in collaboration with co-chaperones. Functions with the co-chaperone, DNLZ, to maintain solubility and regulate ATP hydrolysis. Nucleotide exchange factors, GRPEL1 and GRPEL2, accelerate nucleotide exchange. Mitochondrial chaperone that plays a key role in mitochondrial protein import, folding, and assembly. Plays an essential role in the protein quality control system, the correct folding of proteins, the re-folding of misfolded proteins, and the targeting of proteins for subsequent degradation. These processes are achieved through cycles of ATP binding, ATP hydrolysis, and ADP release, mediated by co-chaperones. In mitochondria, it associates with the TIM (translocase of the inner membrane) protein complex to assist in the import and folding of mitochondrial proteins. Plays an important role in mitochondrial iron-sulfur cluster (ISC) biogenesis, interacts with and stabilizes ISC cluster assembly proteins FXN, NFU1, NFS1 and ISCU. Regulates erythropoiesis via stabilization of ISC assembly. Regulates mitochondrial calcium-dependent apoptosis by coupling two calcium channels, ITPR1 and VDAC1, at the mitochondria-associated endoplasmic reticulum (ER) membrane to facilitate calcium transport from the ER lumen to the mitochondria intermembrane space, providing calcium for the downstream calcium channel MCU, which releases it into the mitochondrial matrix. Although primarily located in the mitochondria, it is also found in other cellular compartments. In the cytosol, it associates with proteins involved in signaling, apoptosis, or senescence. It may play a role in cell cycle regulation via its interaction with and promotion of degradation of TP53. May play a role in the control of cell proliferation and cellular aging. Protects against reactive oxygen species (ROS). Extracellular HSPA9 plays a cytoprotective role by preventing cell lysis following immune attack by the membrane attack complex by disrupting formation of the complex. The polypeptide is Stress-70 protein, mitochondrial (Canis lupus familiaris (Dog)).